Consider the following 331-residue polypeptide: Dof zinc finger protein DOF1.1 (331 aa).

The Dof-type zinc-finger motif lies at 77-131 (LKCPRCDSSNTKFCYYNNYNLTQPRHFCKGCRRYWTQGGALRNVPVGGGCRRNNK). Zn(2+) contacts are provided by cysteine 79, cysteine 82, cysteine 104, and cysteine 107. 2 disordered regions span residues 121–166 (PVGG…TNHQ) and 291–331 (EEQP…NDLL). The span at 135 to 160 (NGNLKSSSSSSKQSSSVNAQSPSSGQ) shows a compositional bias: low complexity. The segment covering 305 to 316 (GLTSPGNQTNQY) has biased composition (polar residues).

As to quaternary structure, interacts with OBF4. Expressed in the vasculature (mainly in the phloem and associated cell files) of cotyledons, leaves, roots, flower stalks and petals. The PEAR proteins (e.g. DOF2.4, DOF5.1, DOF3.2, DOF1.1, DOF5.6 and DOF5.3) form a short-range concentration gradient that peaks at protophloem sieve elements (PSE).

Its subcellular location is the nucleus. Transcription factor that binds specifically to a 5'-AA[AG]G-3' consensus core sequence. Enhances the DNA binding of OBF transcription factors to OCS elements. Involved in the regulation of root development. The PEAR proteins (e.g. DOF2.4, DOF5.1, DOF3.2, DOF1.1, DOF5.6 and DOF5.3) activate gene expression that promotes radial growth of protophloem sieve elements. Element of a regulatory network controlling indole glucosinolates (IGS) biosynthesis, probably by inducing the expression of accurate genes (e.g. CYP83B1). Promotes apical dominance. The chain is Dof zinc finger protein DOF1.1 from Arabidopsis thaliana (Mouse-ear cress).